The primary structure comprises 200 residues: MEQTEVLKPRTLADLIRILHQLFAGDEVNVEEVQAIMEAYESDPTEWAMYAKFDQYRYTRNLVDQGNGKFNLMILCWGEGHGSSIHDHTNSHCFLKMLQGNLKETLFAWPDKKSNEMVKKSERVLRENQCAYINDSIGLHRVENISHTEPAVSLHLYSPPFDTCHAFDQRTGHKNKVTMTFHSKFGIRTPNATSGSLENN.

Residues histidine 86, histidine 88, and histidine 140 each coordinate Fe cation. Residues 93–157 constitute a cross-link (3'-(S-cysteinyl)-tyrosine (Cys-Tyr)); sequence CFLKMLQGNL…TEPAVSLHLY (65 aa).

Belongs to the cysteine dioxygenase family. Monomer. Fe(2+) is required as a cofactor. Requires Ni(2+) as cofactor. Zn(2+) serves as cofactor. In terms of processing, the thioether cross-link between Cys-93 and Tyr-157 plays a structural role through stabilizing the Fe(2+) ion, and prevents the production of highly damaging free hydroxyl radicals by holding the oxygen radical via hydroxyl hydrogen. In terms of tissue distribution, highly expressed in liver and placenta. Low expression in heart, brain and pancreas. Also detected in hepatoblastoma Hep-G2 cells.

It carries out the reaction L-cysteine + O2 = 3-sulfino-L-alanine + H(+). It participates in organosulfur biosynthesis; taurine biosynthesis; hypotaurine from L-cysteine: step 1/2. Catalyzes the oxidation of cysteine to cysteine sulfinic acid with addition of molecular dioxygen. This chain is Cysteine dioxygenase type 1 (CDO1), found in Homo sapiens (Human).